We begin with the raw amino-acid sequence, 193 residues long: Bifunctional protein PyrR (193 aa).

Residues 48-49 (TR), R89, R93, 110-118 (DDVLFSGRT), R143, and V167 contribute to the substrate site. The PRPP-binding signature appears at 106–118 (VVLVDDVLFSGRT).

Belongs to the purine/pyrimidine phosphoribosyltransferase family. PyrR subfamily.

The catalysed reaction is UMP + diphosphate = 5-phospho-alpha-D-ribose 1-diphosphate + uracil. In terms of biological role, regulates the transcription of the pyrimidine nucleotide (pyr) operon in response to exogenous pyrimidines. Also displays a weak uracil phosphoribosyltransferase activity which is not physiologically significant. This Streptomyces coelicolor (strain ATCC BAA-471 / A3(2) / M145) protein is Bifunctional protein PyrR.